Here is a 464-residue protein sequence, read N- to C-terminus: Glutamate--tRNA ligase (464 aa).

The short motif at 12 to 22 (PSPTGYLHIGG) is the 'HIGH' region element. Positions 254–258 (KLSKR) match the 'KMSKS' region motif. Lys-257 contributes to the ATP binding site.

The protein belongs to the class-I aminoacyl-tRNA synthetase family. Glutamate--tRNA ligase type 1 subfamily. In terms of assembly, monomer.

It localises to the cytoplasm. The catalysed reaction is tRNA(Glu) + L-glutamate + ATP = L-glutamyl-tRNA(Glu) + AMP + diphosphate. In terms of biological role, catalyzes the attachment of glutamate to tRNA(Glu) in a two-step reaction: glutamate is first activated by ATP to form Glu-AMP and then transferred to the acceptor end of tRNA(Glu). The protein is Glutamate--tRNA ligase of Mycoplasma mobile (strain ATCC 43663 / 163K / NCTC 11711) (Mesomycoplasma mobile).